A 410-amino-acid chain; its full sequence is Alanine racemase (410 aa).

An RPE1 insert domain is found at 28 to 76; that stretch reads VDFLHNVANKEEFAGNTSPRTAAYTLVREDASLGSTPKLPLGASYAKNL. The active-site Proton acceptor; specific for D-alanine is the lysine 83. At lysine 83 the chain carries N6-(pyridoxal phosphate)lysine. Position 182 (arginine 182) interacts with substrate. The active-site Proton acceptor; specific for L-alanine is the tyrosine 305. Methionine 353 is a substrate binding site.

This sequence belongs to the alanine racemase family. It depends on pyridoxal 5'-phosphate as a cofactor.

It carries out the reaction L-alanine = D-alanine. It participates in amino-acid biosynthesis; D-alanine biosynthesis; D-alanine from L-alanine: step 1/1. Catalyzes the interconversion of L-alanine and D-alanine. May also act on other amino acids. The sequence is that of Alanine racemase (alr) from Rickettsia bellii (strain RML369-C).